We begin with the raw amino-acid sequence, 345 residues long: Tubulin-specific chaperone C (345 aa).

N-acetylmethionine is present on Met-1. The tract at residues 1 to 56 (METGGLSAAALANGDLGSQRERTLVPERLQKREHERQLEVERRKQKRQDQEVEEEK) is disordered. Residues 18-50 (SQRERTLVPERLQKREHERQLEVERRKQKRQDQ) are compositionally biased toward basic and acidic residues. Phosphoserine occurs at positions 80 and 167. A disordered region spans residues 139–170 (FKTRKKDAASATQVASAPDAPAAEGSLTSPPP). The 153-residue stretch at 170-322 (PLKEEGDFDS…NWNDVDDFNW (153 aa)) folds into the C-CAP/cofactor C-like domain.

Belongs to the TBCC family. Supercomplex made of cofactors A to E. Cofactors A and D function by capturing and stabilizing tubulin in a quasi-native conformation. Cofactor E binds to the cofactor D-tubulin complex; interaction with cofactor C then causes the release of tubulin polypeptides that are committed to the native state.

It localises to the cytoplasm. In terms of biological role, tubulin-folding protein; involved in the final step of the tubulin folding pathway. The protein is Tubulin-specific chaperone C (TBCC) of Bos taurus (Bovine).